Reading from the N-terminus, the 149-residue chain is SsrA-binding protein (149 aa).

The protein belongs to the SmpB family.

It is found in the cytoplasm. Its function is as follows. Required for rescue of stalled ribosomes mediated by trans-translation. Binds to transfer-messenger RNA (tmRNA), required for stable association of tmRNA with ribosomes. tmRNA and SmpB together mimic tRNA shape, replacing the anticodon stem-loop with SmpB. tmRNA is encoded by the ssrA gene; the 2 termini fold to resemble tRNA(Ala) and it encodes a 'tag peptide', a short internal open reading frame. During trans-translation Ala-aminoacylated tmRNA acts like a tRNA, entering the A-site of stalled ribosomes, displacing the stalled mRNA. The ribosome then switches to translate the ORF on the tmRNA; the nascent peptide is terminated with the 'tag peptide' encoded by the tmRNA and targeted for degradation. The ribosome is freed to recommence translation, which seems to be the essential function of trans-translation. The polypeptide is SsrA-binding protein (Acholeplasma laidlawii (strain PG-8A)).